Consider the following 205-residue polypeptide: SREBP regulating gene protein (205 aa).

The Cytoplasmic portion of the chain corresponds to 1–16 (MVNLAAMVWRRLLRKR). Residues 17–35 (WVLALVFGLSLVYFLTSTF) traverse the membrane as a helical segment. Residues 36–205 (KQEERAVRDR…GESPPELFPA (170 aa)) lie on the Lumenal side of the membrane. Asn67 carries N-linked (GlcNAc...) asparagine glycosylation.

This sequence belongs to the SPRING family. As to quaternary structure, interacts with SCAP.

The protein resides in the golgi apparatus membrane. Its function is as follows. Positively regulates hepatic SREBP signaling pathway by modulating the proper localization of SCAP (SREBP cleavage-activating protein) to the endoplasmic reticulum, thereby controlling the level of functional SCAP. The chain is SREBP regulating gene protein from Bos taurus (Bovine).